The following is a 700-amino-acid chain: Elongation factor G 2 (700 aa).

The tr-type G domain maps to E8 to V290. Residues A17–T24, D88–H92, and N142–D145 each bind GTP.

This sequence belongs to the TRAFAC class translation factor GTPase superfamily. Classic translation factor GTPase family. EF-G/EF-2 subfamily.

The protein resides in the cytoplasm. In terms of biological role, catalyzes the GTP-dependent ribosomal translocation step during translation elongation. During this step, the ribosome changes from the pre-translocational (PRE) to the post-translocational (POST) state as the newly formed A-site-bound peptidyl-tRNA and P-site-bound deacylated tRNA move to the P and E sites, respectively. Catalyzes the coordinated movement of the two tRNA molecules, the mRNA and conformational changes in the ribosome. The sequence is that of Elongation factor G 2 from Burkholderia mallei (strain ATCC 23344).